A 207-amino-acid chain; its full sequence is Large ribosomal subunit protein uL4 (207 aa).

Residues 49–78 (HAVKNRSAVSGGGRKPWRQKGTGRARQGSI) form a disordered region.

It belongs to the universal ribosomal protein uL4 family. In terms of assembly, part of the 50S ribosomal subunit.

Functionally, one of the primary rRNA binding proteins, this protein initially binds near the 5'-end of the 23S rRNA. It is important during the early stages of 50S assembly. It makes multiple contacts with different domains of the 23S rRNA in the assembled 50S subunit and ribosome. Forms part of the polypeptide exit tunnel. The chain is Large ribosomal subunit protein uL4 from Streptococcus thermophilus (strain CNRZ 1066).